Consider the following 619-residue polypeptide: Very-long-chain aldehyde decarbonylase GL1-1 (619 aa).

5 consecutive transmembrane segments (helical) span residues 44–64 (LLLL…WSSF), 93–113 (DNFL…FPSL), 123–143 (GLAV…YAAH), 190–210 (AAAC…VLGF), and 322–342 (PFLL…WAWS). The 141-residue stretch at 129–269 (LLHVAATEPL…MPLFDLIGGT (141 aa)) folds into the Fatty acid hydroxylase domain.

This sequence belongs to the sterol desaturase family. In terms of assembly, homodimer.

The protein localises to the endoplasmic reticulum membrane. The catalysed reaction is a long-chain fatty aldehyde + 2 NADPH + O2 + H(+) = a long-chain alkane + formate + 2 NADP(+) + H2O. Aldehyde decarbonylase involved in the conversion of aldehydes to alkanes. Core component of a very-long-chain alkane synthesis complex. This chain is Very-long-chain aldehyde decarbonylase GL1-1, found in Oryza sativa subsp. indica (Rice).